The primary structure comprises 908 residues: MSEPATSFTPEIPSALPSIPADATPMMAQYLEIKARWPEALLFYRMGDFYELFFEDAVAASAALDIALTKRGKHLGEDIPMCGVPVHSHDAYLQRLIRKGFKVAVCEQVEDPAEAKKRGAKSVVARAVARLVTPGTLTEDTLLDARAHNYLAALSRTGAEAGFGLAWVDVSTGDFAVTSLAPVALGAELARLSPGELLLPETLDEDEDLAALLAQSGAALTRLPAIRFESGQAERRLKSHLGVSALDGFGAFARAELGAMGALLDYVELTQVGRMPALMPPRRVAATDTMAIDAATRANLELVRTLQGETAGSLLATMDRTVTGAGARELASRLAAPLTDPAAVNRRLDAVEWFHDARDMRARLRAGLKSAPDIARALSRLSLGRGGPRDLAAIANGLAAAHGLCAALDGASPSLLPLPEEIARECEAMRGTAASLQSRLAAMLAEELPLLARDGGFIARGASPELDETRALRDDARKLIAGLQAKYAGESGIAALKIRHNNVLGYYIEVPPRHGEKLLAPPFSDSYIHRQTMANAMRFTTAELAGLASRIAEAAGRALEIELALFDELAAATLLEAPSLSRAAEALARLDATAALAELAAERRYVRPRLDASFAFDIRGGRHPVVEAALARTGQAFVPNDTSLSAESGGGKHIWLLTGPNMAGKSTFLRQNALIAIMAQMGSFVPADEAHIGVVDRLFSRVGAADDLARGRSTFMVEMVETAAILNQAGERSLVILDEIGRGTATFDGLSIAWATVEHLHGVNKSRALFATHYHELTALSEKLAHLANATMRVKEWQGDVVFLHEVAPGAADRSYGIQVAKLAGLPAPVIARAQSVLAALEEGGNHEARTKLIDDLPLFSATAKPAPAVKVSAAEEELKNLNPDELSPKQALELLYKLKALAAKDGE.

659 to 666 (GPNMAGKS) is a binding site for ATP.

This sequence belongs to the DNA mismatch repair MutS family.

Its function is as follows. This protein is involved in the repair of mismatches in DNA. It is possible that it carries out the mismatch recognition step. This protein has a weak ATPase activity. The polypeptide is DNA mismatch repair protein MutS (Parvibaculum lavamentivorans (strain DS-1 / DSM 13023 / NCIMB 13966)).